A 175-amino-acid polypeptide reads, in one-letter code: NADH-ubiquinone oxidoreductase chain 6 (175 aa).

5 consecutive transmembrane segments (helical) span residues 1 to 21 (MVTY…VGVS), 25 to 45 (SPIY…GVVL), 47 to 67 (FGGS…MLVV), 88 to 108 (VVLG…IYAL), and 149 to 169 (YGVW…VIIM).

It belongs to the complex I subunit 6 family. As to quaternary structure, core subunit of respiratory chain NADH dehydrogenase (Complex I) which is composed of 45 different subunits.

Its subcellular location is the mitochondrion inner membrane. The catalysed reaction is a ubiquinone + NADH + 5 H(+)(in) = a ubiquinol + NAD(+) + 4 H(+)(out). Core subunit of the mitochondrial membrane respiratory chain NADH dehydrogenase (Complex I) which catalyzes electron transfer from NADH through the respiratory chain, using ubiquinone as an electron acceptor. Essential for the catalytic activity and assembly of complex I. The sequence is that of NADH-ubiquinone oxidoreductase chain 6 (MT-ND6) from Balaenoptera musculus (Blue whale).